The sequence spans 510 residues: Probable cytochrome P450 4d20 (510 aa).

Cys-455 serves as a coordination point for heme.

It belongs to the cytochrome P450 family. The cofactor is heme.

The protein resides in the endoplasmic reticulum membrane. It localises to the microsome membrane. Functionally, may be involved in the metabolism of insect hormones and in the breakdown of synthetic insecticides. This is Probable cytochrome P450 4d20 (Cyp4d20) from Drosophila melanogaster (Fruit fly).